Reading from the N-terminus, the 238-residue chain is uncharacterized protein (238 aa).

Positions 1–20 (MNNVKLLIAGSAFFAMSAQA) are cleaved as a signal peptide.

This sequence to E.coli GltF.

This is an uncharacterized protein from Escherichia coli (strain K12).